Reading from the N-terminus, the 391-residue chain is Probable acridone synthase 3 (391 aa).

Residue C164 is part of the active site.

It belongs to the thiolase-like superfamily. Chalcone/stilbene synthases family.

The catalysed reaction is N-methylanthraniloyl-CoA + 3 malonyl-CoA + 3 H(+) = 1,3-dihydroxy-N-methylacridone + 3 CO2 + 4 CoA + H2O. The sequence is that of Probable acridone synthase 3 (ACS3) from Ruta graveolens (Common rue).